The chain runs to 469 residues: MAATSPLRDCQAWKDARLPLSTTSNEACKLFDATLTQYVKWTNDKSLGGIEGCLSKLKAADPTFAMGHAISTGLVLIGTGSSVKLDKELDLAVKTMMEVSRTQPLTRREQLHVSAVETFAKGNFPKACELWEQILQDHPTDMLALKFSHDAYFYLGYQEQMRDSVARIYPFWTPDIPLSSYVKGIYSFGLMETNFYDQAEKLAKEALSINPTDAWSVHTVAHIHEMKAEIKDGLEFMQHSETLWKDSDMLACHNYWHWALYLIEKGEYEAALTIYDTHILPSLQANGAMLDVVDSCSMLYRLQMEGVSVGQRWQDVLPVTRKHSRDHTLLFNDAHFLMASLGAHDPQTTQELLTTLRDASESPGENCQHLLARDVGLPLCQALVEAEDGNPDRVLELLLPIRYRIVQLGGSNAQRDVFNQLLIHAALNCTSSVHKNVARSLLMERDALKPNSPLTERLIRKAATVHLLQ.

Residue Ala-2 is modified to N-acetylalanine. At Ser-5 the chain carries Phosphoserine. TPR repeat units follow at residues 108-141 (REQL…HPTD), 180-213 (SYVK…NPTD), and 252-285 (CHNY…SLQA).

It belongs to the TTC38 family.

The chain is Tetratricopeptide repeat protein 38 (TTC38) from Pongo abelii (Sumatran orangutan).